Consider the following 299-residue polypeptide: Regucalcin (299 aa).

E18 is an a divalent metal cation binding site. Residues R101, N103, and E121 each coordinate substrate. A divalent metal cation-binding residues include N154 and D204. D204 acts as the Proton donor/acceptor in catalysis. N6-succinyllysine is present on residues K244 and K253.

It belongs to the SMP-30/CGR1 family. Monomer. It depends on Zn(2+) as a cofactor. Mn(2+) serves as cofactor. Requires Ca(2+) as cofactor. Mg(2+) is required as a cofactor.

It is found in the cytoplasm. It carries out the reaction D-glucono-1,5-lactone + H2O = D-gluconate + H(+). Its pathway is cofactor biosynthesis; L-ascorbate biosynthesis via UDP-alpha-D-glucuronate pathway; L-ascorbate from UDP-alpha-D-glucuronate: step 3/4. Gluconolactonase with low activity towards other sugar lactones, including gulonolactone and galactonolactone. Catalyzes a key step in ascorbic acid (vitamin C) biosynthesis. Can also hydrolyze diisopropyl phosphorofluoridate and phenylacetate (in vitro). Calcium-binding protein. Modulates Ca(2+) signaling, and Ca(2+)-dependent cellular processes and enzyme activities. This Sus scrofa (Pig) protein is Regucalcin (RGN).